An 88-amino-acid polypeptide reads, in one-letter code: Large ribosomal subunit protein bL27 (88 aa).

The interval 1–21 (MAHKKGTGSTRNGRDSNAKRL) is disordered.

Belongs to the bacterial ribosomal protein bL27 family.

The polypeptide is Large ribosomal subunit protein bL27 (Parasynechococcus marenigrum (strain WH8102)).